Consider the following 669-residue polypeptide: Alpha-1,6-mannosylglycoprotein 6-beta-N-acetylglucosaminyltransferase (669 aa).

Topologically, residues M1–C7 are cytoplasmic. Residues V8–I28 form a helical; Signal-anchor for type II membrane protein membrane-spanning segment. Residues S29–L669 are Lumenal-facing. N-linked (GlcNAc...) asparagine glycosylation is found at N30, N412, N437, and N626.

This sequence belongs to the glycosyltransferase 18 family. As to expression, expressed in a complex subset of neurons in larvae and in the spermathecal and pharyngeal-intestinal valves and certain vulval cells of adults.

The protein resides in the golgi apparatus membrane. The catalysed reaction is N(4)-{beta-D-GlcNAc-(1-&gt;2)-[beta-D-GlcNAc-(1-&gt;4)]-alpha-D-Man-(1-&gt;3)-[beta-D-GlcNAc-(1-&gt;2)-alpha-D-Man-(1-&gt;6)]-beta-D-Man-(1-&gt;4)-beta-D-GlcNAc-(1-&gt;4)-beta-D-GlcNAc}-L-asparaginyl-[protein] + UDP-N-acetyl-alpha-D-glucosamine = N(4)-{beta-D-GlcNAc-(1-&gt;2)-[beta-D-GlcNAc-(1-&gt;4)]-alpha-D-Man-(1-&gt;3)-[beta-D-GlcNAc-(1-&gt;2)-[beta-D-GlcNAc-(1-&gt;6)]-alpha-D-Man-(1-&gt;6)]-beta-D-Man-(1-&gt;4)-beta-D-GlcNAc-(1-&gt;4)-beta-D-GlcNAc}-L-asparaginyl-[protein] + UDP + H(+). Its pathway is protein modification; protein glycosylation. Functionally, catalyzes the addition of N-acetylglucosamine (GlcNAc) in beta 1-6 linkage to the alpha-linked mannose of biantennary N-linked oligosaccharides. This is Alpha-1,6-mannosylglycoprotein 6-beta-N-acetylglucosaminyltransferase (gly-2) from Caenorhabditis elegans.